The following is a 1370-amino-acid chain: DNA-directed RNA polymerase subunit beta (1370 aa).

Belongs to the RNA polymerase beta chain family. In terms of assembly, the RNAP catalytic core consists of 2 alpha, 1 beta, 1 beta' and 1 omega subunit. When a sigma factor is associated with the core the holoenzyme is formed, which can initiate transcription.

The catalysed reaction is RNA(n) + a ribonucleoside 5'-triphosphate = RNA(n+1) + diphosphate. Functionally, DNA-dependent RNA polymerase catalyzes the transcription of DNA into RNA using the four ribonucleoside triphosphates as substrates. The chain is DNA-directed RNA polymerase subunit beta from Verminephrobacter eiseniae (strain EF01-2).